Consider the following 447-residue polypeptide: N-succinylarginine dihydrolase (447 aa).

Substrate contacts are provided by residues 19-28, Asn110, and 137-138; these read AGLSFGNEAS and HR. Residue Glu174 is part of the active site. Residue Arg212 participates in substrate binding. The active site involves His248. Residues Asp250 and Asn359 each coordinate substrate. The active-site Nucleophile is Cys365.

This sequence belongs to the succinylarginine dihydrolase family. In terms of assembly, homodimer.

It carries out the reaction N(2)-succinyl-L-arginine + 2 H2O + 2 H(+) = N(2)-succinyl-L-ornithine + 2 NH4(+) + CO2. Its pathway is amino-acid degradation; L-arginine degradation via AST pathway; L-glutamate and succinate from L-arginine: step 2/5. In terms of biological role, catalyzes the hydrolysis of N(2)-succinylarginine into N(2)-succinylornithine, ammonia and CO(2). The chain is N-succinylarginine dihydrolase from Escherichia coli O81 (strain ED1a).